Reading from the N-terminus, the 419-residue chain is UDP-N-acetylglucosamine 1-carboxyvinyltransferase (419 aa).

Phosphoenolpyruvate is bound at residue 22–23 (KN). Residue Arg-93 participates in UDP-N-acetyl-alpha-D-glucosamine binding. Residue Cys-117 is the Proton donor of the active site. At Cys-117 the chain carries 2-(S-cysteinyl)pyruvic acid O-phosphothioketal. UDP-N-acetyl-alpha-D-glucosamine is bound by residues Asp-307 and Ile-329.

The protein belongs to the EPSP synthase family. MurA subfamily.

It localises to the cytoplasm. It catalyses the reaction phosphoenolpyruvate + UDP-N-acetyl-alpha-D-glucosamine = UDP-N-acetyl-3-O-(1-carboxyvinyl)-alpha-D-glucosamine + phosphate. It functions in the pathway cell wall biogenesis; peptidoglycan biosynthesis. In terms of biological role, cell wall formation. Adds enolpyruvyl to UDP-N-acetylglucosamine. In Shewanella baltica (strain OS195), this protein is UDP-N-acetylglucosamine 1-carboxyvinyltransferase.